The primary structure comprises 640 residues: Ribonuclease J (640 aa).

The Zn(2+) site is built by His75, His77, Asp79, His80, His145, and Asp167. Residue 368–372 (HVSGH) participates in substrate binding. His394 contacts Zn(2+). The interval 578–640 (TVSATSATPA…RKRSTTSVSS (63 aa)) is disordered. The segment covering 598–610 (PEPKVKAKPEKKV) has biased composition (basic and acidic residues).

The protein belongs to the metallo-beta-lactamase superfamily. RNA-metabolizing metallo-beta-lactamase-like family. Bacterial RNase J subfamily. As to quaternary structure, homodimer, may be a subunit of the RNA degradosome. Requires Zn(2+) as cofactor.

It is found in the cytoplasm. In terms of biological role, an RNase that has 5'-3' exonuclease and possibly endoonuclease activity. Involved in maturation of rRNA and in some organisms also mRNA maturation and/or decay. The sequence is that of Ribonuclease J from Synechocystis sp. (strain ATCC 27184 / PCC 6803 / Kazusa).